Here is a 300-residue protein sequence, read N- to C-terminus: Protoheme IX farnesyltransferase (300 aa).

9 consecutive transmembrane segments (helical) span residues 20–40 (ITKM…YFLG), 43–63 (TIDF…VGAS), 94–114 (PVAF…LYVI), 116–136 (PKTA…YTPL), 142–162 (LSVF…WVAA), 173–193 (LFMI…WWLF), 215–235 (IQII…VFGV), 241–261 (LTPV…YYAI), and 276–296 (MFAS…DKFI).

The protein belongs to the UbiA prenyltransferase family. Protoheme IX farnesyltransferase subfamily.

The protein resides in the cell membrane. The enzyme catalyses heme b + (2E,6E)-farnesyl diphosphate + H2O = Fe(II)-heme o + diphosphate. The protein operates within porphyrin-containing compound metabolism; heme O biosynthesis; heme O from protoheme: step 1/1. In terms of biological role, converts heme B (protoheme IX) to heme O by substitution of the vinyl group on carbon 2 of heme B porphyrin ring with a hydroxyethyl farnesyl side group. This chain is Protoheme IX farnesyltransferase, found in Christiangramia forsetii (strain DSM 17595 / CGMCC 1.15422 / KT0803) (Gramella forsetii).